The chain runs to 321 residues: uncharacterized protein (321 aa).

Residues 1 to 5 (MKQQA) are Cytoplasmic-facing. Residues 6-26 (GIGILLALTTAICWGALPIAM) form a helical membrane-spanning segment. In terms of domain architecture, EamA 1 spans 17-144 (ICWGALPIAM…LLSGLVMFFN (128 aa)). Over 27–35 (KQVLEVMEP) the chain is Periplasmic. A helical transmembrane segment spans residues 36-56 (PTIVFYRFLMASIGLGAILAV). Residues 57–70 (KKRLPPLRVFRKPR) lie on the Cytoplasmic side of the membrane. The chain crosses the membrane as a helical span at residues 71–91 (WLILLAVATAGLFGNFILFSS). Topologically, residues 92 to 99 (SLQYLSPT) are periplasmic. Residues 100-120 (ASQVIGQLSPVGMMVASVFIL) traverse the membrane as a helical segment. Topologically, residues 121–130 (KEKMRSTQVV) are cytoplasmic. The helical transmembrane segment at 131-151 (GALMLLSGLVMFFNTSLVEIF) threads the bilayer. Over 152–156 (TKLTD) the chain is Periplasmic. The helical transmembrane segment at 157–177 (YTWGVIFGVGAATVWVSYGVA) threads the bilayer. Residues 169 to 292 (TVWVSYGVAQ…GYLGAFVVVA (124 aa)) enclose the EamA 2 domain. Residues 178 to 190 (QKVLLRRLASPQI) lie on the Cytoplasmic side of the membrane. A helical transmembrane segment spans residues 191-211 (LFLLYTLCTIALFPLAKPGVI). Residues 212 to 216 (AQLSH) lie on the Periplasmic side of the membrane. The chain crosses the membrane as a helical span at residues 217–237 (WQLACLIFCGLNTLVGYGALA). The Cytoplasmic segment spans residues 238 to 249 (EAMARWQAAQVS). The helical transmembrane segment at 250–270 (AIITLTPLFTLFFSDLLSLAW) threads the bilayer. Over 271–278 (PDFFARPM) the chain is Periplasmic. The chain crosses the membrane as a helical span at residues 279-299 (LNLLGYLGAFVVVAGAMYSAI). At 300–321 (GHRIWGGLRKHTTVVSQPRAGE) the chain is on the cytoplasmic side.

Belongs to the EamA transporter family.

The protein resides in the cell inner membrane. This is an uncharacterized protein from Escherichia coli O157:H7.